We begin with the raw amino-acid sequence, 343 residues long: Heat-inducible transcription repressor HrcA (343 aa).

This sequence belongs to the HrcA family.

Negative regulator of class I heat shock genes (grpE-dnaK-dnaJ and groELS operons). Prevents heat-shock induction of these operons. The polypeptide is Heat-inducible transcription repressor HrcA (Clostridium acetobutylicum (strain ATCC 824 / DSM 792 / JCM 1419 / IAM 19013 / LMG 5710 / NBRC 13948 / NRRL B-527 / VKM B-1787 / 2291 / W)).